A 230-amino-acid polypeptide reads, in one-letter code: NAD-dependent protein deacylase 1 (230 aa).

In terms of domain architecture, Deacetylase sirtuin-type spans 1-226; that stretch reads MESGIPTYRE…SHLSAFLSRE (226 aa). Residues Tyr-41 and Arg-44 each contribute to the substrate site. 75–78 is an NAD(+) binding site; sequence QNID. His-93 (proton acceptor) is an active-site residue. Zn(2+) contacts are provided by Cys-101, Cys-104, Cys-128, and Cys-131. NAD(+) contacts are provided by residues 168–170, 194–196, and Ala-212; these read GTS and NTV.

It belongs to the sirtuin family. Class III subfamily. Zn(2+) is required as a cofactor.

The protein localises to the cytoplasm. It carries out the reaction N(6)-acetyl-L-lysyl-[protein] + NAD(+) + H2O = 2''-O-acetyl-ADP-D-ribose + nicotinamide + L-lysyl-[protein]. The catalysed reaction is N(6)-succinyl-L-lysyl-[protein] + NAD(+) + H2O = 2''-O-succinyl-ADP-D-ribose + nicotinamide + L-lysyl-[protein]. NAD-dependent lysine deacetylase and desuccinylase that specifically removes acetyl and succinyl groups on target proteins. Modulates the activities of several proteins which are inactive in their acylated form. The chain is NAD-dependent protein deacylase 1 from Pseudomonas syringae pv. tomato (strain ATCC BAA-871 / DC3000).